A 3926-amino-acid polypeptide reads, in one-letter code: Protein bassoon (3926 aa).

The tract at residues 1–161 (MGNEVSLEGG…PTSPYSVPQI (161 aa)) is disordered. Gly2 is lipidated: N-myristoyl glycine. Pro residues-rich tracts occupy residues 15 to 30 (PLPP…PGPG) and 58 to 72 (PPVP…PGPG). The interval 23-32 (PGPGPGPGPG) is 5 X 2 AA tandem repeats of P-G. The interval 61–74 (PGPGPGPGPGPGPG) is 7 X 2 AA tandem repeats of P-G. Composition is skewed to polar residues over residues 90–105 (RAAS…TTPG) and 130–157 (QVDS…SPYS). Ser145 carries the phosphoserine modification. Arg148 is modified (omega-N-methylarginine). 2 consecutive C4-type zinc fingers follow at residues 170–193 (CPIC…CTQC) and 198–220 (CNQC…CLNC). 2 disordered regions span residues 231-343 (TTAP…EQTQ) and 366-459 (SVQP…KTMP). A compositionally biased stretch (polar residues) spans 233–243 (APRSKSQQQLH). Residues Ser244 and Ser248 each carry the phosphoserine modification. Residues 366–377 (SVQPEADTQGQP) show a composition bias toward polar residues. 2 consecutive C4-type zinc fingers follow at residues 465 to 488 (CPLC…CTTC) and 493 to 515 (CNLC…CLNC). 2 disordered regions span residues 524-927 (SLGE…LQGG) and 940-1248 (GSYG…AEGT). Residues 552-569 (PLKQKGPQGLGQPSGPLP) show a composition bias toward low complexity. A run of 3 repeats spans residues 571–577 (KASPLST), 578–584 (KASPLPS), and 585–591 (KASPQAK). Residues 571–591 (KASPLSTKASPLPSKASPQAK) are 3 X 7 AA tandem repeats of K-A-S-P-[LQ]-[APS]-[KST]. The segment covering 619–631 (MPKPPPETTPTPA) has biased composition (pro residues). Residues 671 to 680 (QDASRSPQSL) show a composition bias toward polar residues. Residues 681–698 (SDTGYSSDGISSSQSEIT) are compositionally biased toward low complexity. Over residues 771 to 787 (FDSDEELEDILEEDEDS) the composition is skewed to acidic residues. Over residues 788–797 (AEWRRRREQQ) the composition is skewed to basic and acidic residues. Residues 851–862 (SAEEDNLEEDDT) show a composition bias toward acidic residues. Arg867 is subject to Omega-N-methylarginine. At Ser970 the chain carries Phosphoserine. The segment covering 984-1001 (PASTPSYTSGTSPTSLSS) has biased composition (low complexity). Residues 1037-1092 (IEDSSEEEELREEEELLREQEKMREVEQQRIRSTARKTRRDKEELRAQRRRERSKT) adopt a coiled-coil conformation. The segment covering 1039–1052 (DSSEEEELREEEEL) has biased composition (acidic residues). 2 positions are modified to phosphoserine: Ser1040 and Ser1041. A compositionally biased stretch (basic and acidic residues) spans 1053–1066 (LREQEKMREVEQQR). Ser1090 carries the phosphoserine modification. At Thr1092 the chain carries Phosphothreonine. Phosphoserine occurs at positions 1098 and 1104. Residues 1107 to 1122 (EELRQAAEMEELHRSS) show a composition bias toward basic and acidic residues. Composition is skewed to low complexity over residues 1123–1133 (CSEYSPSPSLD) and 1163–1180 (SPTE…SGRP). The stretch at 1181–1208 (LKSAEEAYEEMMRKAELLQRQQGQAAGA) forms a coiled coil. The segment covering 1182–1197 (KSAEEAYEEMMRKAEL) has biased composition (basic and acidic residues). Residues 1199 to 1209 (QRQQGQAAGAR) show a composition bias toward low complexity. At Ser1226 the chain carries Phosphoserine. Positions 1276–1294 (RDLAFAEDKKKEKQFLNAE) form a coiled coil. 2 disordered regions span residues 1298-1547 (MDPM…RLVW) and 1570-1620 (RMVH…RVPS). A compositionally biased stretch (low complexity) spans 1322–1332 (SFSTPTSSDSS). An O-linked (GlcNAc) threonine glycan is attached at Thr1343. A compositionally biased stretch (basic and acidic residues) spans 1346 to 1355 (FAKETQDPLK). Low complexity-rich tracts occupy residues 1358–1367 (SSPASPSSAS) and 1377–1392 (GPGT…CPAG). O-linked (GlcNAc) threonine glycosylation occurs at Thr1384. Polar residues predominate over residues 1408–1434 (RSPSPSSTAHSYGHSPTTANYGSQTED). Residues 1466 to 1493 (PSRAYSYFASSSPPLSPSSPSESPTFSP) are compositionally biased toward low complexity. Residues Ser1477, Ser1486, and Ser1488 each carry the phosphoserine modification. Over residues 1570 to 1598 (RMVHASASTSPLCSPTETQPTTHGYSQTT) the composition is skewed to polar residues. Over residues 1606-1616 (PPEPPGPPGFP) the composition is skewed to pro residues. Residues Arg1787 and Arg1791 each carry the omega-N-methylarginine modification. Arg1801 is modified (asymmetric dimethylarginine; alternate). An Omega-N-methylarginine; alternate modification is found at Arg1801. Residue Arg1813 is modified to Omega-N-methylarginine. The disordered stretch occupies residues 1924-1978 (PEKSMADAAPPGQSSSPFYGPRDPEPPEPPTYRAQGVVGPGPHEEQRPYPQGLPG). Phosphoserine is present on residues Ser1985 and Ser2041. Omega-N-methylarginine is present on residues Arg2046 and Arg2076. Residues Arg2250, Arg2260, and Arg2266 each carry the asymmetric dimethylarginine modification. The disordered stretch occupies residues 2287 to 2309 (AAKAPGAGGPSRPEMPVGAAREE). O-linked (GlcNAc) threonine glycosylation occurs at Thr2314. A compositionally biased stretch (low complexity) spans 2324–2341 (GAPAPAPLAGQKPPADAA). 2 disordered regions span residues 2324-2370 (GAPA…KQQE) and 2532-2568 (PSSA…ACEL). Positions 2351 to 2476 (RPGFEKEEAS…EEQKQRQKAP (126 aa)) form a coiled coil. Residues 2353-2370 (GFEKEEASQEERQRKQQE) are compositionally biased toward basic and acidic residues. A compositionally biased stretch (polar residues) spans 2533 to 2543 (SSASDMSLQTE). A Phosphoserine modification is found at Ser2570. A phosphothreonine mark is found at Thr2587 and Thr2614. The interval 2601-2655 (RRRARRSADCSVQTDDEDSAEWEQPVRRRRSRLPRHSDSGSDSKHDATASSSSAA) is disordered. Residues 2635–2647 (RHSDSGSDSKHDA) are compositionally biased toward basic and acidic residues. Thr2691 carries O-linked (GlcNAc) threonine glycosylation. An interaction with DAO region spans residues 2721–3268 (EPDGQAQGVA…PGSSGRPGKE (548 aa)). Residues Ser2802, Ser2851, and Ser2857 each carry the phosphoserine modification. The disordered stretch occupies residues 2845–2865 (TLQRSLSDPKPLSPTAEESAK). Thr2936 is a glycosylation site (O-linked (GlcNAc) threonine). The stretch at 2939-2981 (SLLRELDRDLRLVEHESTKLRKKQAELDEEEKEIDAKLKYLEL) forms a coiled coil. Phosphoserine is present on Ser3013. Positions 3039-3055 (AAAPATPSGPTAFQQPR) are enriched in low complexity. Disordered stretches follow at residues 3039–3375 (AAAP…FSPI), 3424–3551 (GMSS…PRAH), and 3572–3897 (EAYH…SVFS). Residues 3083 to 3095 (YPGPSTYPAPAFP) are compositionally biased toward pro residues. Over residues 3165–3176 (ASPVVPMSSAPS) the composition is skewed to low complexity. A compositionally biased stretch (polar residues) spans 3205-3228 (SVSQSPAPTYPSDSHYTSLEQNVP). At Ser3291 the chain carries Phosphoserine. Composition is skewed to basic and acidic residues over residues 3321–3333 (GDSD…RVEK), 3363–3375 (QGME…FSPI), and 3465–3477 (GYER…ERLQ). At Ser3373 the chain carries Phosphoserine. Arg3492 is modified (omega-N-methylarginine). Basic and acidic residues-rich tracts occupy residues 3540–3551 (VQEHVKDGPRAH), 3583–3593 (WFDKPRDARSD), 3628–3647 (LWPH…EHRH), and 3657–3681 (HTGE…EARP). Over residues 3703–3712 (AEYSQPSRAS) the composition is skewed to polar residues. Over residues 3741–3807 (PQAQPQLQGR…RLQQQSQPTT (67 aa)) the composition is skewed to low complexity. Omega-N-methylarginine is present on Arg3808. Low complexity-rich tracts occupy residues 3849 to 3860 (AKAPQQGRAPQA) and 3882 to 3892 (GAPAGQPGADG).

In terms of assembly, interacts with PCLO, ERC2/CAST1, RIMS1 and UNC13A. Interacts with TPRG1L. Interacts with DYNLL1 and DYNLL2; these interactions potentially link PTVs to dynein and myosin V motor complexes. Interacts with ATG5; this interaction is important for the regulation of presynaptic autophagy. Interacts (via C-terminus) with TRIO (via N-terminus). Interacts with CTBP1. Interacts with SIAH1; this interaction negatively regulates SIAH1 E3 ligase activity. Interacts (via coiled region) with DAO; the interaction is direct. Post-translationally, myristoylated. The N-terminal myristoylation is not sufficient for presynaptic localization. As to expression, exclusively expressed in brain.

Its subcellular location is the cytoplasm. It localises to the presynaptic active zone. It is found in the cytoskeleton. The protein localises to the cytoplasmic vesicle. The protein resides in the secretory vesicle. Its subcellular location is the synaptic vesicle membrane. Functionally, scaffold protein of the presynaptic cytomatrix at the active zone (CAZ) which is the place in the synapse where neurotransmitter is released. After synthesis, participates in the formation of Golgi-derived membranous organelles termed Piccolo-Bassoon transport vesicles (PTVs) that are transported along axons to sites of nascent synaptic contacts. At the presynaptic active zone, regulates the spatial organization of synaptic vesicle cluster, the protein complexes that execute membrane fusion and compensatory endocytosis. Also functions in processes other than assembly such as the regulation of specific presynaptic protein ubiquitination by interacting with SIAH1 or the regulation of presynaptic autophagy by associating with ATG5. Also mediates synapse to nucleus communication leading to reconfiguration of gene expression by associating with the transcriptional corepressor CTBP1 and by subsequently reducing the size of its pool available for nuclear import. Inhibits the activity of the proportion of DAO enzyme that localizes to the presynaptic active zone, which may modulate synaptic transmission. This chain is Protein bassoon, found in Homo sapiens (Human).